A 396-amino-acid chain; its full sequence is DNA polymerase processivity factor (396 aa).

The interval 306 to 396 (AEGGESSQKV…VPKTTFNPLI (91 aa)) is disordered. The span at 376–386 (SDSSQSRDRGK) shows a compositional bias: basic and acidic residues.

The protein belongs to the herpesviridae DNA polymerase accessory subunit family. As to quaternary structure, homooligomerizes and adopts an oligomeric ring-shaped structure composed of 6 subunits. Forms a complex with the DNA-binding protein, the DNA polymerase subunit, and the alkaline exonuclease.

Its subcellular location is the virion tegument. The protein localises to the host nucleus. In terms of biological role, plays an essential role in the viral lytic DNA replication by acting as the polymerase accessory subunit. Stimulates the viral DNA polymerase activity and appears to function with it as a holoenzyme. Increases the processivity of the viral polymerase, probably by acting as a sliding clamp that prevents dissociation of the polymerase from the active template. The chain is DNA polymerase processivity factor (ORF59) from Homo sapiens (Human).